Consider the following 295-residue polypeptide: Ribosomal protein L11 methyltransferase (295 aa).

Residues Thr146, Gly167, Asp189, and Asn231 each coordinate S-adenosyl-L-methionine.

It belongs to the methyltransferase superfamily. PrmA family.

It localises to the cytoplasm. It catalyses the reaction L-lysyl-[protein] + 3 S-adenosyl-L-methionine = N(6),N(6),N(6)-trimethyl-L-lysyl-[protein] + 3 S-adenosyl-L-homocysteine + 3 H(+). In terms of biological role, methylates ribosomal protein L11. This chain is Ribosomal protein L11 methyltransferase, found in Vibrio vulnificus (strain YJ016).